Consider the following 439-residue polypeptide: CBL-interacting serine/threonine-protein kinase 26 (439 aa).

The 256-residue stretch at 13 to 268 (YEVGKTLGQG…IPEVLGDAWF (256 aa)) folds into the Protein kinase domain. Residues 19-27 (LGQGTFAKV) and Lys42 contribute to the ATP site. The active-site Proton acceptor is Asp136. The tract at residues 154–183 (DFGLSALSRQVRGDGLLHTACGTPNYAAPE) is activation loop. The residue at position 158 (Ser158) is a Phosphoserine. At Thr172 the chain carries Phosphothreonine. One can recognise an NAF domain in the interval 306–330 (EQPTSMNAFELISMSRALDLGNLFE). The PPI stretch occupies residues 336-365 (KRETRFAAKGAANDLVQKIEEASKPLGFDI).

It belongs to the protein kinase superfamily. CAMK Ser/Thr protein kinase family. SNF1 subfamily. In terms of assembly, interacts with RBOHF (via N-terminus). It depends on Mn(2+) as a cofactor.

The protein localises to the cell membrane. It catalyses the reaction L-seryl-[protein] + ATP = O-phospho-L-seryl-[protein] + ADP + H(+). It carries out the reaction L-threonyl-[protein] + ATP = O-phospho-L-threonyl-[protein] + ADP + H(+). CIPK serine-threonine protein kinases interact with CBL proteins. Binding of a CBL protein to the regulatory NAF domain of CIPK protein lead to the activation of the kinase in a calcium-dependent manner. Involved in the calcium-dependent regulation of reactive oxygen species production by the NADPH oxidase RBOHF. The protein is CBL-interacting serine/threonine-protein kinase 26 (CIPK26) of Arabidopsis thaliana (Mouse-ear cress).